A 141-amino-acid chain; its full sequence is Large-conductance mechanosensitive channel (141 aa).

The next 3 helical transmembrane spans lie at 14 to 34 (VMDL…VKSL), 38 to 58 (IIMP…YFLG), and 81 to 101 (GSFI…FLMV).

Belongs to the MscL family. In terms of assembly, homopentamer.

The protein resides in the cell inner membrane. Functionally, channel that opens in response to stretch forces in the membrane lipid bilayer. May participate in the regulation of osmotic pressure changes within the cell. In Rhizobium rhizogenes (strain K84 / ATCC BAA-868) (Agrobacterium radiobacter), this protein is Large-conductance mechanosensitive channel.